Reading from the N-terminus, the 338-residue chain is Heme A synthase (338 aa).

5 helical membrane-spanning segments follow: residues 6-26 (ITKW…IGGI), 93-113 (GRIT…KGII), 118-138 (IAPY…GWYM), 154-174 (LAFH…QLIK), and 201-221 (VIYL…GLIY). His256 contributes to the heme binding site. A run of 3 helical transmembrane segments spans residues 258-278 (LGGY…LKIE), 285-305 (IAYF…ITLL), and 308-328 (VPII…SVII). Residue His316 participates in heme binding.

This sequence belongs to the COX15/CtaA family. Type 2 subfamily. In terms of assembly, interacts with CtaB. Heme b is required as a cofactor.

It is found in the cell membrane. The enzyme catalyses Fe(II)-heme o + 2 A + H2O = Fe(II)-heme a + 2 AH2. It participates in porphyrin-containing compound metabolism; heme A biosynthesis; heme A from heme O: step 1/1. Catalyzes the conversion of heme O to heme A by two successive hydroxylations of the methyl group at C8. The first hydroxylation forms heme I, the second hydroxylation results in an unstable dihydroxymethyl group, which spontaneously dehydrates, resulting in the formyl group of heme A. The protein is Heme A synthase of Rickettsia canadensis (strain McKiel).